The following is an 867-amino-acid chain: MALLSSSLSSQIPTGSHPLTHTQCIPHFSTTINAGISAGKPRSFYLRWGKGSNKIIACVGEGTTSLPYQSAEKTDSLSAPTLVKREFPPGFWKDHVIDSLTSSHKVSAAEEKRMETLISEIKNIFRSMGYGETNPSAYDTAWVARIPAVDGSEHPEFPETLEWILQNQLKDGSWGEGFYFLAYDRILATLACIITLTLWRTGETQIRKGIEFFKTQAGKIEDEADSHRPSGFEIVFPAMLKEAKVLGLDLPYELPFIKQIIEKREAKLERLPTNILYALPTTLLYSLEGLQEIVDWEKIIKLQSKDGSFLTSPASTAAVFMRTGNKKCLEFLNFVLKKFGNHVPCHYPLDLFERLWAVDTVERLGIDHHFKEEIKDALDYVYSHWDERGIGWARENPIPDIDDTAMGLRILRLHGYNVSSDVLKTFRDENGEFFCFLGQTQRGVTDMLNVNRCSHVAFPGETIMQEAKLCTERYLRNALEDVGAFDKWALKKNIRGEVEYALKYPWHRSMPRLEARSYIEHYGPNDVWLGKTMYMMPYISNLKYLELAKLDFNHVQSLHQKELRDLRRWWKSSGLSELKFTRERVTEIYFSAASFIFEPEFATCRDVYTKISIFTVILDDLYDAHGTLDNLELFSEGVKRWDLSLVDRMPQDMKICFTVLYNTVNEIAVEGRKRQGRDVLGYIRNVLEILLAAHTKEAEWSAARYVPSFDEYIENASVSISLGTLVLISVLFTGEILTDDVLSKIGRGSRFLQLMGLTGRLVNDTKTYEAERGQGEVASAVQCYMKEHPEISEEEALKHVYTVMENALDELNREFVNNRDVPDSCRRLVFETARIMQLFYMEGDGLTLSHEMEIKEHVKNCLFQPVA.

The transit peptide at 1 to 68 directs the protein to the chloroplast; that stretch reads MALLSSSLSS…VGEGTTSLPY (68 aa). Residue Lys267 coordinates substrate. 2 residues coordinate Mg(2+): Asp400 and Asp402. The short motif at 400–403 is the DXDD motif element; that stretch reads DIDD. Lys487 is a substrate binding site. Mg(2+) is bound by residues Asp619, Asp623, Asn763, Thr767, and Glu771. Positions 619-623 match the DDXXD motif motif; sequence DDLYD.

It belongs to the terpene synthase family. Tpsd subfamily. It depends on Mg(2+) as a cofactor.

Its subcellular location is the plastid. It localises to the chloroplast. It carries out the reaction (2E,6E,10E)-geranylgeranyl diphosphate = (+)-copalyl diphosphate. The enzyme catalyses (+)-copalyl diphosphate = isopimara-7,15-diene + diphosphate. It functions in the pathway terpene metabolism; oleoresin biosynthesis. Involved in defensive oleoresin formation in conifers in response to insect attack or other injury. Involved in diterpene (C20) olefins biosynthesis. Bifunctional enzyme that catalyzes two sequential cyclizations of geranylgeranyl diphosphate (GGPP) to isopimara-7,15-diene. In Picea abies (Norway spruce), this protein is Bifunctional isopimaradiene synthase, chloroplastic (TPS-ISO).